Reading from the N-terminus, the 341-residue chain is Major histocompatibility complex class I-related protein 1 (341 aa).

A signal peptide spans 1–22; it reads MGELMAFLLPLIIVLMVKHSDS. Residues 23–109 are alpha-1; that stretch reads RTHSLRYFRL…KRLQRHYNHS (87 aa). The tract at residues 23-201 is antigen-binding cleft; sequence RTHSLRYFRL…EYGKDILQRT (179 aa). Over 23–302 the chain is Extracellular; that stretch reads RTHSLRYFRL…QESETIPLVM (280 aa). 8-(9H-purin-6-yl)-2-oxa-8-azabicyclo[3.3.1]nona-3,6-diene-4,6-dicarbaldehyde is bound by residues Tyr-29 and Arg-31. Residues Arg-31, Ser-46, and Lys-65 each coordinate 5-(2-oxoethylideneamino)-6-(D-ribitylamino)uracil. 3 residues coordinate 5-(2-oxopropylideneamino)-6-(D-ribitylamino)uracil: Arg-31, Ser-46, and Lys-65. 7-hydroxy-6-methyl-8-(1-D-ribityl)lumazine contacts are provided by Arg-31, Ser-46, and Lys-65. Residues Lys-65 and His-80 each coordinate 8-(9H-purin-6-yl)-2-oxa-8-azabicyclo[3.3.1]nona-3,6-diene-4,6-dicarbaldehyde. Lys-65 lines the 2-amino-4-oxopteridine-6-carbaldehyde pocket. Lys-65 contributes to the pyridoxal binding site. Asn-107 carries an N-linked (GlcNAc...) asparagine glycan. An alpha-2 region spans residues 110 to 201; the sequence is GSHTYQRMIG…EYGKDILQRT (92 aa). 8-(9H-purin-6-yl)-2-oxa-8-azabicyclo[3.3.1]nona-3,6-diene-4,6-dicarbaldehyde is bound at residue Arg-116. Residues Arg-116, Tyr-174, and Gln-175 each contribute to the 5-(2-oxoethylideneamino)-6-(D-ribitylamino)uracil site. 5-(2-oxopropylideneamino)-6-(D-ribitylamino)uracil is bound by residues Arg-116, Tyr-174, and Gln-175. The 7-hydroxy-6-methyl-8-(1-D-ribityl)lumazine site is built by Arg-116, Tyr-174, and Gln-175. Cystine bridges form between Cys-120/Cys-183 and Cys-222/Cys-278. The interval 202-293 is alpha-3; it reads EPPLVRVNRK…GVHMVLQVPQ (92 aa). Residues 203-299 form the Ig-like C1-type domain; sequence PPLVRVNRKE…QVPQESETIP (97 aa). The segment at 294–302 is connecting peptide; it reads ESETIPLVM. The chain crosses the membrane as a helical span at residues 303-323; that stretch reads KAVSGSIVLVIVLAGVGVLVW. The Cytoplasmic portion of the chain corresponds to 324 to 341; the sequence is RRRPREQNGAIYLPTPDR.

It belongs to the MHC class I family. As to quaternary structure, heterotrimer that consists of MR1, B2M and metabolite antigen. Major classes of metabolite ligands presented by MR1 include riboflavin-related antigens, pyrimidines and ribityl lumazines, nucleobase adducts and folate derivatives. Forms reversible covalent Schiff base complexes with microbial pyrimidine-based metabolite, which serves as a molecular switch triggering complete folding, stable association with B2M and translocation of the ternary complex from endoplasmic reticulum to the plasma membrane. Alternatively, forms non-Schiff base complexes with ribityl lumazines. On antigen-presenting cells, the ternary complex interacts with TCR on MR1-restricted T cells. Interacts with TAPBP and TAPBPL chaperones in the endoplasmic reticulum. TAPBP associated or not with MHC class I peptide loading complex binds ligand-free MR1 or MR1-B2M complex, providing for stable MR1 pools ready for metabolite antigen processing. TAPBPL interacts with MR1 in a ligand-independent way; this interaction may stabilize MR1 pool and facilitate ligand loading and dissociation. Structurally, MR1-B2M heterodimer adopts a topology similar to classical MHC class I molecules, with alpha-1 and alpha-2 domains of MR1 forming the antigen-binding cleft composed of two alpha-helices resting on a floor of 7-stranded anti-parallel beta-pleated sheet. MR1-B2M heterodimer (via alpha-helices) interacts with TCR (via CDR domains). N-glycosylated.

The protein localises to the cell membrane. It is found in the endoplasmic reticulum membrane. Its subcellular location is the golgi apparatus membrane. The protein resides in the early endosome membrane. It localises to the late endosome membrane. In terms of biological role, antigen-presenting molecule specialized in displaying microbial pyrimidine-based metabolites to alpha-beta T cell receptors (TCR) on innate-type mucosal-associated invariant T (MAIT) cells. In complex with B2M preferentially presents riboflavin-derived metabolites to semi-invariant TCRs on MAIT cells, guiding immune surveillance of the microbial metabolome at mucosal epithelial barriers. Signature pyrimidine-based microbial antigens are generated via non-enzymatic condensation of metabolite intermediates of the riboflavin pathway with by-products arising from other metabolic pathways such as glycolysis. Typical potent antigenic metabolites are 5-(2-oxoethylideneamino)-6-D-ribitylaminouracil (5-OE-RU) and 5-(2-oxopropylideneamino)-6-D-ribitylaminouracil (5-OP-RU), products of condensation of 5-amino-6-D-ribityaminouracil (5-A-RU) with glyoxal or methylglyoxal by-products, respectively. May present microbial antigens to various MAIT cell subsets, providing for unique recognition of diverse microbes, including pathogens that do not synthesize riboflavin. Upon antigen recognition, elicits rapid innate-type MAIT cell activation to eliminate pathogenic microbes by directly killing infected cells. During T cell development, drives thymic selection and post-thymic terminal differentiation of MAIT cells in a process dependent on commensal microflora. Acts as an immune sensor of cancer cell metabolome. May present a tumor-specific or -associated metabolite essential for cancer cell survival to a pan-cancer TCR on a non-MAIT CD8-positive T cell clone, triggering T cell-mediated killing of a wide range of cancer cell types. May present tumor-enriched pyridoxal and pyridoxal 5'-phosphate antigens, enabling preferential recognition of cancer cells. Presents nucleobase carbonyl adducts generated during oxidative stress. Captures M3Ade, a nucleobase adduct composed of one adenine modified by a malondialdehyde trimer, for recognition by MR1-restricted T cell clones expressing a polyclonal TCR repertoire. This is Major histocompatibility complex class I-related protein 1 from Pan troglodytes (Chimpanzee).